The sequence spans 375 residues: N-acetylneuraminate epimerase (375 aa).

Residues 1-22 (MKLTKTALCTALFATFTFSANA) form the signal peptide. 7 Kelch repeats span residues 43-87 (TVYV…AAVD), 89-140 (KLYV…ASHG), 142-176 (KVYI…EIAA), 177-222 (AYFD…TIQG), 225-273 (LVVV…LAGA), 295-344 (KQYK…SYNN), and 346-375 (VLLI…LTIE). The active-site Proton acceptor is Glu-231.

It belongs to the NanM family. As to quaternary structure, homodimer.

Its subcellular location is the periplasm. The catalysed reaction is N-acetyl-alpha-neuraminate = N-acetyl-beta-neuraminate. In terms of biological role, converts alpha-N-acetylneuranimic acid (Neu5Ac) to the beta-anomer, accelerating the equilibrium between the alpha- and beta-anomers. Probably facilitates sialidase-negative bacteria to compete successfully for limited amounts of extracellular Neu5Ac, which is likely taken up in the beta-anomer. In addition, the rapid removal of sialic acid from solution might be advantageous to the bacterium to damp down host responses. This is N-acetylneuraminate epimerase from Haemophilus influenzae (strain PittEE).